The chain runs to 270 residues: Bifunctional folate synthesis protein (270 aa).

The segment at 1 to 119 is DHNA; the sequence is MDQLQIKDLE…TCSVTIHRRK (119 aa). Residues glutamate 21, tyrosine 53, and 72–73 each bind substrate; that span reads IE. Catalysis depends on lysine 99, which acts as the Proton donor/acceptor; for DHNA activity. Residues 120–270 form an HPPK region; the sequence is QRAFIALGSN…IRNLYDALKK (151 aa). ATP is bound by residues 160 to 163, 171 to 173, 192 to 195, 200 to 215, 227 to 233, and 238 to 240; these read TEPW, FAN, LAIE, RVRE…DLDL, DLILPHP, and RLF. Aspartate 212 and aspartate 214 together coordinate Mg(2+).

This sequence in the N-terminal section; belongs to the DHNA family. It in the C-terminal section; belongs to the HPPK family. In terms of assembly, homotrimer or homotetramer.

The enzyme catalyses 7,8-dihydroneopterin = 6-hydroxymethyl-7,8-dihydropterin + glycolaldehyde. It catalyses the reaction 6-hydroxymethyl-7,8-dihydropterin + ATP = (7,8-dihydropterin-6-yl)methyl diphosphate + AMP + H(+). The protein operates within cofactor biosynthesis; tetrahydrofolate biosynthesis; 2-amino-4-hydroxy-6-hydroxymethyl-7,8-dihydropteridine diphosphate from 7,8-dihydroneopterin triphosphate: step 3/4. It participates in cofactor biosynthesis; tetrahydrofolate biosynthesis; 2-amino-4-hydroxy-6-hydroxymethyl-7,8-dihydropteridine diphosphate from 7,8-dihydroneopterin triphosphate: step 4/4. In terms of biological role, catalyzes two sequential steps of tetrahydrofolate biosynthesis, the conversion of 7,8-dihydroneopterin to 6-hydroxymethyl-7,8-dihydropterin diphosphate. This Streptococcus pneumoniae serotype 4 (strain ATCC BAA-334 / TIGR4) protein is Bifunctional folate synthesis protein.